Consider the following 507-residue polypeptide: Archaeal-type glutamate synthase [NADPH] (507 aa).

4Fe-4S ferredoxin-type domains follow at residues 10-39 (FVVERDDYKCIRCLACVRVCSYGANFYDEN) and 41-70 (NRVYTENTKCVGCHFCEAICPTEAITVRKN). The [4Fe-4S] cluster site is built by Cys19, Cys22, Cys25, Cys29, Cys50, Cys53, Cys56, and Cys60.

It belongs to the glutamate synthase family. FMN is required as a cofactor.

It catalyses the reaction 2 L-glutamate + NADP(+) = L-glutamine + 2-oxoglutarate + NADPH + H(+). The chain is Archaeal-type glutamate synthase [NADPH] from Thermotoga maritima (strain ATCC 43589 / DSM 3109 / JCM 10099 / NBRC 100826 / MSB8).